Here is a 512-residue protein sequence, read N- to C-terminus: Maturase K (512 aa).

The protein belongs to the intron maturase 2 family. MatK subfamily.

The protein resides in the plastid. It is found in the chloroplast. Its function is as follows. Usually encoded in the trnK tRNA gene intron. Probably assists in splicing its own and other chloroplast group II introns. This chain is Maturase K, found in Alisma canaliculatum (Water plantain).